The primary structure comprises 320 residues: Cytochrome c biogenesis protein CcsA (320 aa).

A run of 7 helical transmembrane segments spans residues 13 to 33 (ISFSVVSIVITIHFLTLFLLV), 46 to 66 (GMIVTFFCITGLLVTRWIYSG), 73 to 93 (LYESLIFLSWGFSLIHMVSYL), 147 to 167 (MVLGYAALLCGSLLSVALLVI), 226 to 246 (IISLGFIFLTIGILSGAVWAN), 259 to 274 (ETWAFITWTVFAIYFH), and 289 to 309 (VASMGFLIIWICYFGVNLLGI).

This sequence belongs to the CcmF/CycK/Ccl1/NrfE/CcsA family. In terms of assembly, may interact with Ccs1.

Its subcellular location is the plastid. The protein localises to the chloroplast thylakoid membrane. Its function is as follows. Required during biogenesis of c-type cytochromes (cytochrome c6 and cytochrome f) at the step of heme attachment. This chain is Cytochrome c biogenesis protein CcsA, found in Gossypium barbadense (Sea Island cotton).